Consider the following 137-residue polypeptide: Small ribosomal subunit protein uS11 (137 aa).

Residues 116 to 137 (EDVTPVPSDSTRKKGGRRGRRL) are disordered. Residues 128–137 (KKGGRRGRRL) are compositionally biased toward basic residues.

The protein belongs to the universal ribosomal protein uS11 family.

The chain is Small ribosomal subunit protein uS11 (RPS14) from Kluyveromyces lactis (strain ATCC 8585 / CBS 2359 / DSM 70799 / NBRC 1267 / NRRL Y-1140 / WM37) (Yeast).